Consider the following 452-residue polypeptide: Maltoporin (452 aa).

Residues 1-25 (MMITLRKLPLAVAVAAGVMSAQAMA) form the signal peptide.

The protein belongs to the porin LamB (TC 1.B.3) family. Homotrimer formed of three 18-stranded antiparallel beta-barrels, containing three independent channels.

Its subcellular location is the cell outer membrane. The enzyme catalyses beta-maltose(in) = beta-maltose(out). In terms of biological role, involved in the transport of maltose and maltodextrins. The protein is Maltoporin of Salmonella enteritidis PT4 (strain P125109).